The following is an 873-amino-acid chain: Sine oculis-binding protein homolog (873 aa).

A compositionally biased stretch (basic and acidic residues) spans 1–14; the sequence is MAEMEKEGRPPENK. Positions 1–26 are disordered; it reads MAEMEKEGRPPENKRSRKPAHPVKRE. FCS-type zinc fingers lie at residues 142–180 and 216–256; these read DDVS…KCFA and FKNN…KCLN. 5 disordered regions span residues 307–338, 413–485, 550–608, 742–766, and 779–811; these read ARRK…SDTA, RGPP…GAPL, KPPS…NQAQ, STEG…ELAV, and SNCH…NPAD. Over residues 312-338 the composition is skewed to low complexity; the sequence is PSPASAAGQIQGPGPSASTTASPSDTA. The span at 460 to 485 shows a compositional bias: pro residues; the sequence is IHPPTTPTMPGNPPGLLPPPPPGAPL. Residues 554-570 show a composition bias toward polar residues; sequence GFSSNGENFIPSNSSET. The segment covering 571–603 has biased composition (low complexity); the sequence is PGGKPPNSSSSPRESKQGSSKPSDSSPSCSGQS. Residues 783–793 are compositionally biased toward basic and acidic residues; it reads LEGDTGKKAGE.

It belongs to the SOBP family.

Its function is as follows. Implicated in development of the cochlea. This Gallus gallus (Chicken) protein is Sine oculis-binding protein homolog.